The chain runs to 385 residues: Dual-specificity RNA methyltransferase RlmN (385 aa).

Glu-113 acts as the Proton acceptor in catalysis. Positions Val-120–Arg-352 constitute a Radical SAM core domain. Cys-127 and Cys-363 form a disulfide bridge. [4Fe-4S] cluster contacts are provided by Cys-134, Cys-138, and Cys-141. S-adenosyl-L-methionine contacts are provided by residues Gly-189–Glu-190, Ser-221, Ser-243–His-245, and Asn-320. The S-methylcysteine intermediate role is filled by Cys-363.

This sequence belongs to the radical SAM superfamily. RlmN family. [4Fe-4S] cluster serves as cofactor.

The protein resides in the cytoplasm. The enzyme catalyses adenosine(2503) in 23S rRNA + 2 reduced [2Fe-2S]-[ferredoxin] + 2 S-adenosyl-L-methionine = 2-methyladenosine(2503) in 23S rRNA + 5'-deoxyadenosine + L-methionine + 2 oxidized [2Fe-2S]-[ferredoxin] + S-adenosyl-L-homocysteine. It catalyses the reaction adenosine(37) in tRNA + 2 reduced [2Fe-2S]-[ferredoxin] + 2 S-adenosyl-L-methionine = 2-methyladenosine(37) in tRNA + 5'-deoxyadenosine + L-methionine + 2 oxidized [2Fe-2S]-[ferredoxin] + S-adenosyl-L-homocysteine. Functionally, specifically methylates position 2 of adenine 2503 in 23S rRNA and position 2 of adenine 37 in tRNAs. m2A2503 modification seems to play a crucial role in the proofreading step occurring at the peptidyl transferase center and thus would serve to optimize ribosomal fidelity. The protein is Dual-specificity RNA methyltransferase RlmN of Phenylobacterium zucineum (strain HLK1).